We begin with the raw amino-acid sequence, 682 residues long: MSRKQLALFEPVLLVQALTDAVKKLSPRAQWRNPVMFVVWAGSVLTTLLTLAMVTGQIAGSALFTGIISLWLWFTVLFANFAEALAEGRSKAQANSLKGVKKTAFARRLRAPRHDAQADNVPAAELRKGDIVLVKAGDIIPCDGEVIEGGASVDESAITGESAPVIRESGGDFASVTGGTRILSDWLVIACSVNPGETFLDRMIAMVEGAQRRKTPNEIALTILLIALTIVFLLATATLWPFSAWGGNAVSVTVLVALLVCLIPTTIGGLLSAIGVAGMSRMLGANVIATSGRAVEAAGDVDVLLLDKTGTITLGNRQASDFIPARGVDERTLADAAQLASLADETPEGRSIVILAKQRFNLRERDVQSLHATFVPFTAQSRMSGINIDNRMIRKGSVDAIRRHVESNGGHFPADVEQNVENVARLGATPLVVVEGARILGVIALKDIVKGGIKERFAQLRKMGIKTVMITGDNRLTAAAIAAEAGVDDFLAEATPEAKLALIRQYQAEGRLVAMTGDGTNDAPALAQADVAVAMNSGTQAAKEAGNMVDLDSNPTKLIEVVHIGKQMLMTRGSLTTFSIANDVAKYFAIIPAAFAATYPQLNALNVMGLHSPNSAILSAVIFNALIIIFLIPLALKGVSYKPLSASAMLRRNLWIYGLGGLVVPFIGIKVIDVLLTLLGLA.

Helical transmembrane passes span 34-54 (PVMFVVWAGSVLTTLLTLAMV), 58-78 (IAGSALFTGIISLWLWFTVLF), 219-239 (IALTILLIALTIVFLLATATL), and 254-274 (VLVALLVCLIPTTIGGLLSAI). Residue Asp307 is the 4-aspartylphosphate intermediate of the active site. Residues Asp344, Glu348, 377–384 (FTAQSRMS), and Lys395 contribute to the ATP site. Positions 518 and 522 each coordinate Mg(2+). 3 helical membrane-spanning segments follow: residues 588-608 (FAIIPAAFAATYPQLNALNVM), 616-636 (AILSAVIFNALIIIFLIPLAL), and 662-682 (LVVPFIGIKVIDVLLTLLGLA).

Belongs to the cation transport ATPase (P-type) (TC 3.A.3) family. Type IA subfamily. In terms of assembly, the system is composed of three essential subunits: KdpA, KdpB and KdpC.

The protein resides in the cell inner membrane. It catalyses the reaction K(+)(out) + ATP + H2O = K(+)(in) + ADP + phosphate + H(+). Part of the high-affinity ATP-driven potassium transport (or Kdp) system, which catalyzes the hydrolysis of ATP coupled with the electrogenic transport of potassium into the cytoplasm. This subunit is responsible for energy coupling to the transport system and for the release of the potassium ions to the cytoplasm. This is Potassium-transporting ATPase ATP-binding subunit from Salmonella newport (strain SL254).